The primary structure comprises 224 residues: uncharacterized protein (224 aa).

The 4Fe-4S domain occupies 9-68 (SKMVDVNEITKYLPGFNCGACGYKRCDLFAEALLNKDVKLEDCPFLLRERFKENYEKLKE). Residues Cys-26, Cys-29, Cys-34, and Cys-51 each coordinate [4Fe-4S] cluster.

[4Fe-4S] cluster serves as cofactor.

This is an uncharacterized protein from Methanocaldococcus jannaschii (strain ATCC 43067 / DSM 2661 / JAL-1 / JCM 10045 / NBRC 100440) (Methanococcus jannaschii).